Reading from the N-terminus, the 436-residue chain is UPF0597 protein YhaM (436 aa).

The protein belongs to the UPF0597 family.

The protein is UPF0597 protein YhaM of Salmonella heidelberg (strain SL476).